The following is a 508-amino-acid chain: General transcription factor IIF subunit 1 (508 aa).

N-acetylalanine is present on alanine 2. Residue threonine 156 is modified to Phosphothreonine. Positions 177–446 (MQQRRLKDQD…TPSSGDVQVT (270 aa)) are disordered. Residues serine 217, serine 218, serine 221, and serine 224 each carry the phosphoserine modification. The span at 232 to 251 (SKAKKKAPVTKAGRKKKKKK) shows a compositional bias: basic residues. 2 stretches are compositionally biased toward acidic residues: residues 255–270 (DEAF…EGQE) and 303–325 (EQSE…EEEE). Threonine 331 is modified (phosphothreonine). Positions 343–355 (DDSDSSEESDIDS) are enriched in acidic residues. A compositionally biased stretch (basic residues) spans 364–374 (AKKKTPPKRER). A phosphoserine mark is found at serine 377, serine 380, serine 381, and serine 385. The span at 378–388 (GGSSKGTSRPG) shows a compositional bias: polar residues. Phosphothreonine is present on threonine 389. The segment covering 389 to 406 (TPSAEAASTSSTLRAAAS) has biased composition (low complexity). Serine 391 carries the phosphoserine modification. Position 407 is an N6-acetyllysine (lysine 407). Residues 428-443 (GPQSLSGKSTPSSGDV) are compositionally biased toward polar residues. Phosphoserine is present on residues serine 431, serine 433, and serine 436. Threonine 437 carries the post-translational modification Phosphothreonine. The residue at position 440 (serine 440) is a Phosphoserine.

This sequence belongs to the TFIIF alpha subunit family. In terms of assembly, heterodimer of an alpha and a beta subunit. Interacts with GTF2F2, CTDP1, TAF6/TAFII80 and URI1. Interacts with GTF2B (via C-terminus and preferentially via acetylated form); this interaction prevents binding of GTF2B to GTF2F2. Part of TBP-based Pol II pre-initiation complex (PIC), in which Pol II core assembles with general transcription factors and other specific initiation factors including GTF2E1, GTF2E2, GTF2F1, GTF2F2, TCEA1, ERCC2, ERCC3, GTF2H2, GTF2H3, GTF2H4, GTF2H5, GTF2A1, GTF2A2, GTF2B and TBP; this large multi-subunit PIC complex mediates DNA unwinding and targets Pol II core to the transcription start site where the first phosphodiester bond forms. Phosphorylated on Ser and other residues by TAF1 and casein kinase II-like kinases.

The protein resides in the nucleus. Functionally, TFIIF is a general transcription initiation factor that binds to RNA polymerase II and helps to recruit it to the initiation complex in collaboration with TFIIB. It promotes transcription elongation. In Mus musculus (Mouse), this protein is General transcription factor IIF subunit 1 (Gtf2f1).